The sequence spans 185 residues: Tetratricopeptide repeat protein 36 homolog (185 aa).

TPR repeat units follow at residues Ser53–Ala86, Val88–Gln119, and Cys125–Phe158.

This sequence belongs to the TTC36 family.

The polypeptide is Tetratricopeptide repeat protein 36 homolog (Drosophila melanogaster (Fruit fly)).